A 77-amino-acid chain; its full sequence is Early E3 9.0 kDa glycoprotein (77 aa).

Asparagine 7 is a glycosylation site (N-linked (GlcNAc...) asparagine; by host). A helical membrane pass occupies residues 27-47 (ITILIVIGILILSVILYFIFC).

The protein belongs to the adenoviridae E3A-1 family.

It localises to the host nucleus membrane. The chain is Early E3 9.0 kDa glycoprotein from Human adenovirus B serotype 3 (HAdV-3).